We begin with the raw amino-acid sequence, 313 residues long: Small ribosomal subunit protein uS2 (313 aa).

Residues Asp-234–Lys-243 are compositionally biased toward basic and acidic residues. The segment at Asp-234–Lys-313 is disordered. Residues Ala-244–Ala-256 show a composition bias toward basic residues. The span at Ala-266–Glu-297 shows a compositional bias: basic and acidic residues.

This sequence belongs to the universal ribosomal protein uS2 family.

The polypeptide is Small ribosomal subunit protein uS2 (Coxiella burnetii (strain Dugway 5J108-111)).